We begin with the raw amino-acid sequence, 485 residues long: MTITPQHLIALLPLLIVGLTVVVVMLSIAWRRNHFLNATLSVIGLNAALVSLWFVGQAGAMDVTPLMRVDGFAMLYTGLVLLASLATCTFAYPWLEGYNDNQEEFYLLVLIASLGGILLANANHLAALFLGIELISLPLFGLIGYAFRQKRSLEASIKYTILSAAASSFLLFGMALVYAQSGNLSFEALGKSLGDGMLHEPLLLAGFGLMIVGLGFKLSLAPFHLWTPDVYQGAPAPVSTFLATASKIAIFGVVMRLFLYAPVGDSEAVRVVLGIIAFASIIFGNLMALSQTNIKRLLGYSSISHLGYLLVALIALQSGEMSMEAVGVYLAGYLFSSLGAFGVVSLMSSPFRGPDADSLYSYRGLFWHRPVLAAVMTVMMLSLAGIPMTLGFIGKFYVLAVGVQASLWWLVAAVVVGSAIGLYYYLRVAVSLYLHAPQQPGRDAPTNWQYSAGGIVVLISALLVLVLGVWPQPLISLVQLAMPLM.

14 helical membrane passes run 8-28, 35-55, 71-91, 105-125, 127-147, 159-179, 203-223, 235-255, 271-291, 297-317, 326-346, 373-393, 408-430, and 455-475; these read LIAL…MLSI, FLNA…LWFV, GFAM…CTFA, FYLL…ANHL, ALFL…GYAF, YTIL…LVYA, LLAG…LAPF, PAPV…GVVM, VVLG…ALSQ, LLGY…IALQ, VGVY…VVSL, AAVM…LGFI, WWLV…RVAV, and IVVL…QPLI.

It belongs to the complex I subunit 2 family. NDH-1 is composed of 13 different subunits. Subunits NuoA, H, J, K, L, M, N constitute the membrane sector of the complex.

It localises to the cell inner membrane. The enzyme catalyses a quinone + NADH + 5 H(+)(in) = a quinol + NAD(+) + 4 H(+)(out). Functionally, NDH-1 shuttles electrons from NADH, via FMN and iron-sulfur (Fe-S) centers, to quinones in the respiratory chain. The immediate electron acceptor for the enzyme in this species is believed to be ubiquinone. Couples the redox reaction to proton translocation (for every two electrons transferred, four hydrogen ions are translocated across the cytoplasmic membrane), and thus conserves the redox energy in a proton gradient. In Salmonella paratyphi C (strain RKS4594), this protein is NADH-quinone oxidoreductase subunit N.